Reading from the N-terminus, the 249-residue chain is Triosephosphate isomerase (249 aa).

9–11 (NWK) serves as a coordination point for substrate. Residue histidine 95 is the Electrophile of the active site. Catalysis depends on glutamate 167, which acts as the Proton acceptor. Substrate is bound by residues glycine 173, serine 213, and 234 to 235 (GG).

It belongs to the triosephosphate isomerase family. In terms of assembly, homodimer.

It is found in the cytoplasm. It carries out the reaction D-glyceraldehyde 3-phosphate = dihydroxyacetone phosphate. Its pathway is carbohydrate biosynthesis; gluconeogenesis. It participates in carbohydrate degradation; glycolysis; D-glyceraldehyde 3-phosphate from glycerone phosphate: step 1/1. Involved in the gluconeogenesis. Catalyzes stereospecifically the conversion of dihydroxyacetone phosphate (DHAP) to D-glyceraldehyde-3-phosphate (G3P). This is Triosephosphate isomerase from Dictyoglomus turgidum (strain DSM 6724 / Z-1310).